Reading from the N-terminus, the 301-residue chain is Acetyl-coenzyme A carboxylase carboxyl transferase subunit beta (301 aa).

A CoA carboxyltransferase N-terminal domain is found at 25 to 294; it reads LWIKCPETGE…SAANDMNGGA (270 aa).

Belongs to the AccD/PCCB family. Acetyl-CoA carboxylase is a heterohexamer composed of biotin carboxyl carrier protein (AccB), biotin carboxylase (AccC) and two subunits each of ACCase subunit alpha (AccA) and ACCase subunit beta (AccD).

The protein localises to the cytoplasm. The enzyme catalyses N(6)-carboxybiotinyl-L-lysyl-[protein] + acetyl-CoA = N(6)-biotinyl-L-lysyl-[protein] + malonyl-CoA. It functions in the pathway lipid metabolism; malonyl-CoA biosynthesis; malonyl-CoA from acetyl-CoA: step 1/1. Functionally, component of the acetyl coenzyme A carboxylase (ACC) complex. Biotin carboxylase (BC) catalyzes the carboxylation of biotin on its carrier protein (BCCP) and then the CO(2) group is transferred by the transcarboxylase to acetyl-CoA to form malonyl-CoA. The chain is Acetyl-coenzyme A carboxylase carboxyl transferase subunit beta from Rhizobium etli (strain CIAT 652).